A 278-amino-acid chain; its full sequence is D-aminoacyl-tRNA deacylase (278 aa).

The protein belongs to the DtdA deacylase family. As to quaternary structure, monomer. Requires Zn(2+) as cofactor.

It catalyses the reaction a D-aminoacyl-tRNA + H2O = a tRNA + a D-alpha-amino acid + H(+). The catalysed reaction is glycyl-tRNA(Ala) + H2O = tRNA(Ala) + glycine + H(+). Its function is as follows. D-aminoacyl-tRNA deacylase with broad substrate specificity. By recycling D-aminoacyl-tRNA to D-amino acids and free tRNA molecules, this enzyme counteracts the toxicity associated with the formation of D-aminoacyl-tRNA entities in vivo. This chain is D-aminoacyl-tRNA deacylase, found in Archaeoglobus fulgidus (strain ATCC 49558 / DSM 4304 / JCM 9628 / NBRC 100126 / VC-16).